The sequence spans 21 residues: Putative sperm adenylate cyclase (21 aa).

The enzyme catalyses ATP = 3',5'-cyclic AMP + diphosphate. In Mus musculus (Mouse), this protein is Putative sperm adenylate cyclase.